A 529-amino-acid polypeptide reads, in one-letter code: Peptide chain release factor 3 (529 aa).

One can recognise a tr-type G domain in the interval 11-280; that stretch reads AKRRTFAIIS…GLVEWAPAPM (270 aa). GTP contacts are provided by residues 20–27, 88–92, and 142–145; these read SHPDAGKT, DTPGH, and NKLD.

The protein belongs to the TRAFAC class translation factor GTPase superfamily. Classic translation factor GTPase family. PrfC subfamily.

The protein localises to the cytoplasm. In terms of biological role, increases the formation of ribosomal termination complexes and stimulates activities of RF-1 and RF-2. It binds guanine nucleotides and has strong preference for UGA stop codons. It may interact directly with the ribosome. The stimulation of RF-1 and RF-2 is significantly reduced by GTP and GDP, but not by GMP. The polypeptide is Peptide chain release factor 3 (Shigella flexneri serotype 5b (strain 8401)).